A 562-amino-acid polypeptide reads, in one-letter code: Cell division protein FtsZ (562 aa).

GTP is bound by residues 23–27 (GAGGN), 110–112 (GTG), Glu-141, Arg-145, and Asp-189. Over residues 404–413 (PAAARPAQQP) the composition is skewed to low complexity. Disordered regions lie at residues 404–428 (PAAA…RLDP) and 462–562 (ETAQ…RQAN). Positions 418-428 (FRPDPQLRLDP) are enriched in basic and acidic residues. 2 stretches are compositionally biased toward low complexity: residues 464–486 (AQAA…QPQR) and 500–510 (GLLRRPAAAQP).

It belongs to the FtsZ family. Homodimer. Polymerizes to form a dynamic ring structure in a strictly GTP-dependent manner. Interacts directly with several other division proteins. Interacts with FtsZ-like protein (also called FtsZm).

It localises to the cytoplasm. Functionally, essential cell division protein that forms a contractile ring structure (Z ring) at the future cell division site. The regulation of the ring assembly controls the timing and the location of cell division. One of the functions of the FtsZ ring is to recruit other cell division proteins to the septum to produce a new cell wall between the dividing cells. Binds GTP and shows GTPase activity. Mild overexpression impairs cell division, leading to very elongated cells. Isolated protein forms filaments and bundles in the presence of GTP. The protein is Cell division protein FtsZ of Magnetospirillum gryphiswaldense (strain DSM 6361 / JCM 21280 / NBRC 15271 / MSR-1).